We begin with the raw amino-acid sequence, 93 residues long: Protein translocase subunit SecE (93 aa).

The segment at 1–33 is disordered; that stretch reads MTDALGSIDMPDAEDETREKKARKGGKRGKKGP. Residues 20–33 are compositionally biased toward basic residues; the sequence is KKARKGGKRGKKGP. A helical membrane pass occupies residues 64 to 84; sequence TVVIVFVVIMIGLVTVIDFGF.

The protein belongs to the SecE/SEC61-gamma family. In terms of assembly, component of the Sec protein translocase complex. Heterotrimer consisting of SecY, SecE and SecG subunits. The heterotrimers can form oligomers, although 1 heterotrimer is thought to be able to translocate proteins. Interacts with the ribosome. Interacts with SecDF, and other proteins may be involved. Interacts with SecA.

The protein resides in the cell membrane. Its function is as follows. Essential subunit of the Sec protein translocation channel SecYEG. Clamps together the 2 halves of SecY. May contact the channel plug during translocation. This is Protein translocase subunit SecE from Streptomyces virginiae (Streptomyces cinnamonensis).